A 235-amino-acid polypeptide reads, in one-letter code: Meiotically up-regulated gene 123 protein (235 aa).

Over residues 1 to 14 the composition is skewed to basic and acidic residues; sequence MERLATRSSHDDPY. 3 disordered regions span residues 1 to 34, 58 to 83, and 169 to 235; these read MERL…SNGS, PLHS…GGMR, and SRAD…FDSD. The span at 15–34 shows a compositional bias: polar residues; sequence SRSSLPTSNAINSNHESNGS. A compositionally biased stretch (low complexity) spans 61–77; that stretch reads SSPSIKSSSQNGKSSSK. Polar residues predominate over residues 176–202; sequence ETTQSDGFESRSGSPTHDIQSYLVNRR. Phosphoserine is present on residues serine 180, serine 187, and serine 189. Residue threonine 191 is modified to Phosphothreonine.

Its subcellular location is the cytoplasm. It localises to the nucleus. Its function is as follows. Involved in sporulation and has a role in meiosis. In Schizosaccharomyces pombe (strain 972 / ATCC 24843) (Fission yeast), this protein is Meiotically up-regulated gene 123 protein (mug123).